The sequence spans 125 residues: Large ribosomal subunit protein bL12 (125 aa).

It belongs to the bacterial ribosomal protein bL12 family. In terms of assembly, homodimer. Part of the ribosomal stalk of the 50S ribosomal subunit. Forms a multimeric L10(L12)X complex, where L10 forms an elongated spine to which 2 to 4 L12 dimers bind in a sequential fashion. Binds GTP-bound translation factors.

In terms of biological role, forms part of the ribosomal stalk which helps the ribosome interact with GTP-bound translation factors. Is thus essential for accurate translation. The chain is Large ribosomal subunit protein bL12 from Caldanaerobacter subterraneus subsp. tengcongensis (strain DSM 15242 / JCM 11007 / NBRC 100824 / MB4) (Thermoanaerobacter tengcongensis).